The primary structure comprises 707 residues: Polyribonucleotide nucleotidyltransferase (707 aa).

The Mg(2+) site is built by Asp486 and Asp492. Positions 553–612 (PRIHKIKINPEKIKDVIGKGGSVIRMLTEETGTIIEIEDDGTIKISATIGEKAKNAIRRI) constitute a KH domain. An S1 motif domain is found at 622–690 (GRIYSGKVTR…RQGRLRLSIK (69 aa)).

It belongs to the polyribonucleotide nucleotidyltransferase family. Component of the RNA degradosome, which is a multiprotein complex involved in RNA processing and mRNA degradation. Requires Mg(2+) as cofactor.

Its subcellular location is the cytoplasm. The catalysed reaction is RNA(n+1) + phosphate = RNA(n) + a ribonucleoside 5'-diphosphate. Its function is as follows. Involved in mRNA degradation. Catalyzes the phosphorolysis of single-stranded polyribonucleotides processively in the 3'- to 5'-direction. This Buchnera aphidicola subsp. Schizaphis graminum (strain Sg) protein is Polyribonucleotide nucleotidyltransferase.